We begin with the raw amino-acid sequence, 102 residues long: Putative nuclear receptor corepressor 1-like protein NCOR1P1 (102 aa).

Residues 1–18 (MSSSGYPPNQGAFSTEQS) show a composition bias toward polar residues. The interval 1–68 (MSSSGYPPNQ…DQNASPSKLS (68 aa)) is disordered. Positions 68 to 100 (SKEELIECMDRVDREIAKVEQQILKLKKKQVKV) form a coiled coil.

This sequence belongs to the N-CoR nuclear receptor corepressors family.

This is Putative nuclear receptor corepressor 1-like protein NCOR1P1 (NCOR1P1) from Homo sapiens (Human).